An 810-amino-acid chain; its full sequence is Exocyst complex component 6B (810 aa).

The stretch at 79–118 forms a coiled coil; sequence TELLKVRGEAQKLKNQVTDTNRKLQHEGKELVIAMEELKQ. The interval 258–282 is disordered; it reads ESTSPKSEQDSGILDVEDEEDDEEV. Residues 272–282 show a composition bias toward acidic residues; the sequence is DVEDEEDDEEV.

Belongs to the SEC15 family. As to quaternary structure, the exocyst complex is composed of SEC3, SEC5, SEC6, SEC8, SEC10, SEC15, EXO70 and EXO84.

Functionally, component of the exocyst complex involved in the docking of exocytic vesicles with fusion sites on the plasma membrane. The chain is Exocyst complex component 6B (Exoc6b) from Mus musculus (Mouse).